Here is an 89-residue protein sequence, read N- to C-terminus: Small ribosomal subunit protein uS15 (89 aa).

It belongs to the universal ribosomal protein uS15 family. In terms of assembly, part of the 30S ribosomal subunit. Forms a bridge to the 50S subunit in the 70S ribosome, contacting the 23S rRNA.

In terms of biological role, one of the primary rRNA binding proteins, it binds directly to 16S rRNA where it helps nucleate assembly of the platform of the 30S subunit by binding and bridging several RNA helices of the 16S rRNA. Its function is as follows. Forms an intersubunit bridge (bridge B4) with the 23S rRNA of the 50S subunit in the ribosome. This chain is Small ribosomal subunit protein uS15, found in Geobacillus thermodenitrificans (strain NG80-2).